The sequence spans 231 residues: DNA repair protein RecO (231 aa).

Belongs to the RecO family.

Its function is as follows. Involved in DNA repair and RecF pathway recombination. This chain is DNA repair protein RecO, found in Coxiella burnetii (strain CbuK_Q154) (Coxiella burnetii (strain Q154)).